A 732-amino-acid polypeptide reads, in one-letter code: Cullin-3B (732 aa).

One can recognise a Cullin neddylation domain in the interval 662–724 (DRKPQIEAAI…RDFLERDNTD (63 aa)). Residue Lys676 forms a Glycyl lysine isopeptide (Lys-Gly) (interchain with G-Cter in NEDD8) linkage.

The protein belongs to the cullin family. As to quaternary structure, interacts with BTB/POZ-MATH proteins BPM1 and BPM3. In terms of processing, neddylated. Deneddylated via its interaction with the COP9 signalosome (CSN) complex.

Its pathway is protein modification; protein ubiquitination. Component of the cullin-RING ubiquitin ligases (CRL), or CUL3-RBX1-BTB protein E3 ligase complexes which mediate the ubiquitination and subsequent proteasomal degradation of target proteins. The functional specificity of the CRL complex depends on the BTB domain-containing protein as the substrate recognition component. Involved in embryo pattern formation and endosperm development. Required for the normal division and organization of the root stem cells and columella root cap cells. Regulates primary root growth by an unknown pathway, but in an ethylene-dependent manner. Functions in distal root patterning, by an ethylene-independent mechanism. Functionally redundant with CUL3A. The chain is Cullin-3B (CUL3B) from Arabidopsis thaliana (Mouse-ear cress).